The sequence spans 276 residues: Sulfur carrier protein FdhD (276 aa).

Cys-120 serves as the catalytic Cysteine persulfide intermediate.

Belongs to the FdhD family.

Its subcellular location is the cytoplasm. Functionally, required for formate dehydrogenase (FDH) activity. Acts as a sulfur carrier protein that transfers sulfur from IscS to the molybdenum cofactor prior to its insertion into FDH. The polypeptide is Sulfur carrier protein FdhD (Bordetella parapertussis (strain 12822 / ATCC BAA-587 / NCTC 13253)).